The following is a 459-amino-acid chain: mRNA-capping enzyme subunit alpha (459 aa).

Lys-70 functions as the N6-GMP-lysine intermediate in the catalytic mechanism. A disordered region spans residues 415 to 459 (MAGGSGRPLPSQSQNATLSTSKPVHSQPPSNDKEPKYVDEDDWSD). Positions 424-444 (PSQSQNATLSTSKPVHSQPPS) are enriched in polar residues.

The protein belongs to the eukaryotic GTase family. In terms of assembly, heterodimer. The mRNA-capping enzyme is composed of two separate chains alpha and beta, respectively a mRNA guanylyltransferase and an mRNA 5'-triphosphate monophosphatase.

The protein resides in the nucleus. The enzyme catalyses a 5'-end diphospho-ribonucleoside in mRNA + GTP + H(+) = a 5'-end (5'-triphosphoguanosine)-ribonucleoside in mRNA + diphosphate. Second step of mRNA capping. Transfer of the GMP moiety of GTP to the 5'-diphosphate terminus of RNA via a covalent enzyme-GMP reaction intermediate. The polypeptide is mRNA-capping enzyme subunit alpha (CEG1) (Saccharomyces cerevisiae (strain ATCC 204508 / S288c) (Baker's yeast)).